Here is a 580-residue protein sequence, read N- to C-terminus: MTPTQNEIHPKHSYSPIRKHGLEVPETEIALDDSPSGPNEPFRIYRTRGPETDPTLGLPRLRTPWITARGDVTEYTGRERLLIDDGRSAMRRGQASAEWKGQKPAPLKALPGKRVTQMAYARAGEITREMEFVALREHVDPEFVRSEVARGRAIIPNNVNHPESEPMIIGRKFLTKINANIGNSAVTSSIEEEVSKLQWATRWGADTVMDLSTGDDIHTTREWIIRNSPVPIGTVPIYQALEKVNGVAADLSWEVFRDTVIEQCEQGVDYMTIHAGVLLAYIPLTTRRVTGIVSRGGSIMAGWCLAHHRESFLFEHFDELCEIFAQYDVAFSLGDGLRPGSLADANDAAQFAELKTIGELTQRAWEYDVQVMVEGPGHVPLNMIQENNELEQKWAADAPFYTLGPLVTDIAPGYDHITSAIGAAHIAMGGTAMLCYVTPKEHLGLPNRNDVKTGVITYKLAAHAADVAKGHPGARAWDDAMSKARFEFRWNDQFALSLDPDTAIAYHDETLPAEPAKTAHFCSMCGPKFCSMRISQDIRDMFGEQIAELGMPGVGASDSTEGMKEKSREFVAGGGEVYRE.

The disordered stretch occupies residues 1–58; that stretch reads MTPTQNEIHPKHSYSPIRKHGLEVPETEIALDDSPSGPNEPFRIYRTRGPETDPTLGL. Substrate contacts are provided by residues Asn180, Met209, Tyr238, His274, 294–296, 335–338, and Glu374; these read SRG and DGLR. Residue His378 participates in Zn(2+) binding. Tyr401 is a binding site for substrate. His442 contacts Zn(2+). [4Fe-4S] cluster-binding residues include Cys522, Cys525, and Cys530. Residues 554-580 are disordered; the sequence is VGASDSTEGMKEKSREFVAGGGEVYRE.

It belongs to the ThiC family. [4Fe-4S] cluster serves as cofactor.

It carries out the reaction 5-amino-1-(5-phospho-beta-D-ribosyl)imidazole + S-adenosyl-L-methionine = 4-amino-2-methyl-5-(phosphooxymethyl)pyrimidine + CO + 5'-deoxyadenosine + formate + L-methionine + 3 H(+). It functions in the pathway cofactor biosynthesis; thiamine diphosphate biosynthesis. Functionally, catalyzes the synthesis of the hydroxymethylpyrimidine phosphate (HMP-P) moiety of thiamine from aminoimidazole ribotide (AIR) in a radical S-adenosyl-L-methionine (SAM)-dependent reaction. The sequence is that of Phosphomethylpyrimidine synthase from Corynebacterium efficiens (strain DSM 44549 / YS-314 / AJ 12310 / JCM 11189 / NBRC 100395).